A 449-amino-acid polypeptide reads, in one-letter code: Ribulose bisphosphate carboxylase large chain (449 aa).

An N6,N6,N6-trimethyllysine modification is found at Lys7. 2 residues coordinate substrate: Asn116 and Thr166. Residue Lys168 is the Proton acceptor of the active site. Lys170 contributes to the substrate binding site. Positions 194, 196, and 197 each coordinate Mg(2+). Residue Lys194 is modified to N6-carboxylysine. The Proton acceptor role is filled by His287. Residues Arg288, His320, and Ser372 each coordinate substrate.

The protein belongs to the RuBisCO large chain family. Type I subfamily. In terms of assembly, heterohexadecamer of 8 large chains and 8 small chains; disulfide-linked. The disulfide link is formed within the large subunit homodimers. Mg(2+) is required as a cofactor. In terms of processing, the disulfide bond which can form in the large chain dimeric partners within the hexadecamer appears to be associated with oxidative stress and protein turnover.

The protein resides in the plastid. The protein localises to the chloroplast. The catalysed reaction is 2 (2R)-3-phosphoglycerate + 2 H(+) = D-ribulose 1,5-bisphosphate + CO2 + H2O. The enzyme catalyses D-ribulose 1,5-bisphosphate + O2 = 2-phosphoglycolate + (2R)-3-phosphoglycerate + 2 H(+). Its function is as follows. RuBisCO catalyzes two reactions: the carboxylation of D-ribulose 1,5-bisphosphate, the primary event in carbon dioxide fixation, as well as the oxidative fragmentation of the pentose substrate in the photorespiration process. Both reactions occur simultaneously and in competition at the same active site. This is Ribulose bisphosphate carboxylase large chain from Liriope muscari (Big blue lilyturf).